Here is a 206-residue protein sequence, read N- to C-terminus: Small ribosomal subunit protein uS2 (206 aa).

Belongs to the universal ribosomal protein uS2 family.

In Pyrobaculum neutrophilum (strain DSM 2338 / JCM 9278 / NBRC 100436 / V24Sta) (Thermoproteus neutrophilus), this protein is Small ribosomal subunit protein uS2.